The primary structure comprises 161 residues: PHD finger-containing protein 4 (161 aa).

The PHD-type zinc finger occupies 30–80 (KKPCEVCGSNANDHAIMTCFLCRDTREHIYCARVHLRSVPRMWICEECRMN). C33, C36, C48, C51, H57, C60, C74, and C77 together coordinate Zn(2+). Polar residues predominate over residues 114 to 132 (TMTSSDSGNQISATHQQPP). A disordered region spans residues 114-161 (TMTSSDSGNQISATHQQPPQAHASPVAVPMDTSSSDNQQPPSDSESAI). A compositionally biased stretch (low complexity) spans 146–161 (SSSDNQQPPSDSESAI).

As to quaternary structure, interacts directly with AIPP3/BDT1.

Together with AIPP3/BDT1, cooperates to form a BAH-PHD bivalent histone reader complex able to read histone H3 lysine 27 trimethylation (H3K27me3) histone marks in order to regulate transcription, especially to prevent early flowering; promotes AIPP3/BDT1 binding to H3K27me3. The protein is PHD finger-containing protein 4 of Arabidopsis thaliana (Mouse-ear cress).